Here is a 529-residue protein sequence, read N- to C-terminus: [Pyruvate dehydrogenase [acetyl-transferring]]-phosphatase 2, mitochondrial (529 aa).

A mitochondrion-targeting transit peptide spans 1–66 (MSSTVSYWIL…FTLCKAYRHT (66 aa)). In terms of domain architecture, PPM-type phosphatase spans 106–517 (VLRFESNQLA…DDITVTVVYF (412 aa)). Mn(2+) is bound by residues D141, G142, D412, and D508.

Belongs to the PP2C family. The cofactor is Mg(2+).

Its subcellular location is the mitochondrion. The catalysed reaction is O-phospho-L-seryl-[pyruvate dehydrogenase E1 alpha subunit] + H2O = L-seryl-[pyruvate dehydrogenase E1 alpha subunit] + phosphate. Mitochondrial enzyme that catalyzes the dephosphorylation and concomitant reactivation of the alpha subunit of the E1 component of the pyruvate dehydrogenase complex (PDC), thereby stimulating the conversion of pyruvate into acetyl-CoA. Acts as a crucial regulator of T cell metabolism and function, with a particular focus on T-helper Th17. The protein is [Pyruvate dehydrogenase [acetyl-transferring]]-phosphatase 2, mitochondrial of Homo sapiens (Human).